A 108-amino-acid polypeptide reads, in one-letter code: Glutaredoxin-1 (108 aa).

In terms of domain architecture, Glutaredoxin spans 3–106; sequence EEFVQQRLAN…DILSSIGVLR (104 aa). Cys-23 and Cys-26 are joined by a disulfide.

It belongs to the glutaredoxin family.

The protein resides in the virion. In terms of biological role, has thioltransferase and dehydroascorbate reductase activities. The sequence is that of Glutaredoxin-1 (OPG075) from Cowpox virus (strain GRI-90 / Grishak) (CPV).